Reading from the N-terminus, the 143-residue chain is Nucleoside diphosphate kinase (143 aa).

6 residues coordinate ATP: Lys11, Phe59, Arg87, Thr93, Arg104, and Asn114. Residue His117 is the Pros-phosphohistidine intermediate of the active site.

Belongs to the NDK family. Homotetramer. Mg(2+) is required as a cofactor.

It is found in the cytoplasm. It catalyses the reaction a 2'-deoxyribonucleoside 5'-diphosphate + ATP = a 2'-deoxyribonucleoside 5'-triphosphate + ADP. The catalysed reaction is a ribonucleoside 5'-diphosphate + ATP = a ribonucleoside 5'-triphosphate + ADP. Functionally, major role in the synthesis of nucleoside triphosphates other than ATP. The ATP gamma phosphate is transferred to the NDP beta phosphate via a ping-pong mechanism, using a phosphorylated active-site intermediate. The protein is Nucleoside diphosphate kinase of Salmonella agona (strain SL483).